A 728-amino-acid polypeptide reads, in one-letter code: Cellulose synthase-like protein E6 (728 aa).

2 consecutive transmembrane segments (helical) span residues 21 to 43 and 53 to 73; these read AVYR…YRAT and AAWL…VITQ. Catalysis depends on residues aspartate 141 and aspartate 446. A run of 5 helical transmembrane segments spans residues 523–543, 546–566, 646–666, 669–689, and 707–727; these read LWAA…LGLV, TPLF…VFCV, PEFV…VAGL, IMAG…LIVI, and IPLP…LLPI.

This sequence belongs to the glycosyltransferase 2 family. Plant cellulose synthase-like E subfamily.

Its subcellular location is the golgi apparatus membrane. In terms of biological role, thought to be a Golgi-localized beta-glycan synthase that polymerize the backbones of noncellulosic polysaccharides (hemicelluloses) of plant cell wall. The sequence is that of Cellulose synthase-like protein E6 (CSLE6) from Oryza sativa subsp. japonica (Rice).